The chain runs to 414 residues: Esterase FrsA (414 aa).

Belongs to the FrsA family.

It carries out the reaction a carboxylic ester + H2O = an alcohol + a carboxylate + H(+). Its function is as follows. Catalyzes the hydrolysis of esters. In Escherichia coli O139:H28 (strain E24377A / ETEC), this protein is Esterase FrsA.